Reading from the N-terminus, the 392-residue chain is Tryptophan synthase beta chain (392 aa).

The residue at position 86 (Lys-86) is an N6-(pyridoxal phosphate)lysine.

This sequence belongs to the TrpB family. In terms of assembly, tetramer of two alpha and two beta chains. Pyridoxal 5'-phosphate serves as cofactor.

It catalyses the reaction (1S,2R)-1-C-(indol-3-yl)glycerol 3-phosphate + L-serine = D-glyceraldehyde 3-phosphate + L-tryptophan + H2O. It functions in the pathway amino-acid biosynthesis; L-tryptophan biosynthesis; L-tryptophan from chorismate: step 5/5. The beta subunit is responsible for the synthesis of L-tryptophan from indole and L-serine. In Buchnera aphidicola subsp. Schlechtendalia chinensis, this protein is Tryptophan synthase beta chain (trpB).